A 463-amino-acid chain; its full sequence is Putative dipeptidase YtjP (463 aa).

Position 85 (His-85) interacts with Zn(2+). Residue Asp-87 is part of the active site. Position 116 (Asp-116) interacts with Zn(2+). The active-site Proton acceptor is the Glu-150. Positions 151, 174, and 436 each coordinate Zn(2+).

This sequence belongs to the peptidase M20A family. Requires Zn(2+) as cofactor.

The protein is Putative dipeptidase YtjP (ytjP) of Bacillus subtilis (strain 168).